Reading from the N-terminus, the 190-residue chain is Protein A52 (190 aa).

Belongs to the orthopoxvirus A52R protein family. As to quaternary structure, interacts with host TRAF6 and IRAK2.

In terms of biological role, bcl-2-like protein which targets host toll-like receptor signaling complexes to suppress innate immune response. Interacts with host TRAF6 to activate p38 and subsequently induce the expression of several cytokines such as IL-10. Also associates with host IRAK2 to inhibit NF-kappa-B signaling. This chain is Protein A52, found in Vaccinia virus (strain Western Reserve) (VACV).